The sequence spans 389 residues: Geodin cluster transcriptional coactivator gedD (389 aa).

The region spanning 13–83 (LAWHVQLLAC…QPGQIMHTPL (71 aa)) is the HTH iclR-type domain. Positions 43 to 62 (VRDLAQLCGVSETTLSRVVR) form a DNA-binding region, H-T-H motif.

Its subcellular location is the nucleus. Transcriptional coactivator; part of the gene cluster that mediates the biosynthesis of geodin, an intermediate in the biosynthesis of other natural products. With gedR, coregulates the production of geodin. This is Geodin cluster transcriptional coactivator gedD (gedD) from Aspergillus terreus (strain NIH 2624 / FGSC A1156).